The chain runs to 443 residues: Dynein regulatory complex protein 9 (443 aa).

Disordered regions lie at residues 1 to 40 and 415 to 443; these read MEED…LPKE and GFKM…GKKK. The region spanning 393-422 is the IQ domain; that stretch reads ELKSVIKLQAWWRGTMIRREIGGFKMPKDK. Positions 415 to 430 are enriched in basic and acidic residues; sequence GFKMPKDKVDSKDSKG. Residues 431-443 are compositionally biased toward basic residues; that stretch reads KGKGKDKRRGKKK.

The protein belongs to the DRC9 family. Component of the nexin-dynein regulatory complex (N-DRC). Interacts (via IQ domain) with CALM when calcium levels are low. Does not interact with CALM in the presence of Ca(2+). Interacts with the HSP70 proteins HSPA1L and HSPA8. May form a complex with CAMK4 and HSP70.

It is found in the cytoplasm. It localises to the cell projection. Its subcellular location is the cilium. The protein resides in the flagellum. The protein localises to the cytoskeleton. It is found in the flagellum axoneme. Component of the nexin-dynein regulatory complex (N-DRC), a key regulator of ciliary/flagellar motility which maintains the alignment and integrity of the distal axoneme and regulates microtubule sliding in motile axonemes. Binds calmodulin when cellular Ca(2+) levels are low and thereby contributes to the regulation of calcium and calmodulin-dependent protein kinase IV (CAMK4) activity; contributes to the regulation of CAMK4 signaling cascades. Required for normal axoneme assembly in sperm flagella, normal sperm tail formation and for male fertility. The sequence is that of Dynein regulatory complex protein 9 (IQCG) from Macaca fascicularis (Crab-eating macaque).